The primary structure comprises 337 residues: N-acetyl-gamma-glutamyl-phosphate reductase (337 aa).

Residue Cys145 is part of the active site.

The protein belongs to the NAGSA dehydrogenase family. Type 1 subfamily.

It is found in the cytoplasm. It catalyses the reaction N-acetyl-L-glutamate 5-semialdehyde + phosphate + NADP(+) = N-acetyl-L-glutamyl 5-phosphate + NADPH + H(+). It functions in the pathway amino-acid biosynthesis; L-arginine biosynthesis; N(2)-acetyl-L-ornithine from L-glutamate: step 3/4. Functionally, catalyzes the NADPH-dependent reduction of N-acetyl-5-glutamyl phosphate to yield N-acetyl-L-glutamate 5-semialdehyde. This chain is N-acetyl-gamma-glutamyl-phosphate reductase, found in Methanosarcina barkeri (strain Fusaro / DSM 804).